The following is a 798-amino-acid chain: MDASVVRFSQSPARVPPEFEPDMEKIKRRLLKYGVDPTPKILNNLRKKEIQKHNRRTKRETESEAEVYTEAQKQSMEEEARFQTLRREYKQFTRSISGKRGGDVGLMVGNPWEGIERVKLKELVSGVRREEVSAGELKKENLKELKKILEKDLRWVLDDDVDVEEFDLDKEFDPAKRWRNEGEAVRVLVDRLSGREINEKHWKFVRMMNQSGLQFTEDQMLKIVDRLGRKQSWKQASAVVHWVYSDKKRKHLRSRFVYTKLLSVLGFARRPQEALQIFNQMLGDRQLYPDMAAYHCIAVTLGQAGLLKELLKVIERMRQKPTKLTKNLRQKNWDPVLEPDLVVYNAILNACVPTLQWKAVSWVFVELRKNGLRPNGATYGLAMEVMLESGKFDRVHDFFRKMKSSGEAPKAITYKVLVRALWREGKIEEAVEAVRDMEQKGVIGTGSVYYELACCLCNNGRWCDAMLEVGRMKRLENCRPLEITFTGLIAASLNGGHVDDCMAIFQYMKDKCDPNIGTANMMLKVYGRNDMFSEAKELFEEIVSRKETHLVPNEYTYSFMLEASARSLQWEYFEHVYQTMVLSGYQMDQTKHASMLIEASRAGKWSLLEHAFDAVLEDGEIPHPLFFTELLCHATAKGDFQRAITLINTVALASFQISEEEWTDLFEEHQDWLTQDNLHKLSDHLIECDYVSEPTVSNLSKSLKSRCGSSSSSAQPLLAVDVTTQSQGEKPEEDLLLQDTTMEDDNSANGEAWEFTETELETLGLEELEIDDDEESSDSDSLSVYDILKEWEESSKKE.

2 disordered regions span residues 1–21 (MDAS…EFEP) and 50–73 (IQKH…EAQK). PPR repeat units follow at residues 254 to 284 (SRFV…MLGD), 290 to 324 (DMAA…PTKL), 340 to 374 (DLVV…GLRP), 375 to 409 (NGAT…GEAP), 410 to 444 (KAIT…GVIG), 445 to 480 (TGSV…NCRP), 481 to 511 (LEIT…MKDK), 515 to 545 (NIGT…IVSR), 553 to 587 (NEYT…GYQM), and 588 to 622 (DQTK…GEIP).

Belongs to the PPR family. P subfamily. As to quaternary structure, interacts (via C-terminus) with SIGF (via N-terminus).

Its subcellular location is the plastid. The protein resides in the chloroplast. Functionally, involved in the regulation of early chloroplast development and chloroplast gene expression in a SIGF-dependent manner. This chain is Pentatricopeptide repeat-containing protein At5g67570, chloroplastic (DG1), found in Arabidopsis thaliana (Mouse-ear cress).